The primary structure comprises 559 residues: Probable inorganic carbon transporter subunit DabB1 (559 aa).

13 consecutive transmembrane segments (helical) span residues 4–24 (LQWLIPLLPLLSALLVQLFAA), 33–53 (LSVALGTLTVIVAAYQLVAYI), 76–96 (LSSIMSLVVAGISLIVHVYSI), 106–126 (PRFFLLLDLMTASILLMVAAG), 173–193 (LVLAAVLLYQTYGAIDFPTLF), 202–222 (ATIMGLPTAITAAFLVALSAF), 240–260 (GPTPVSALMHAGIVNAGGFII), 273–293 (VLHMLFVVGLITALVGSVLML), 310–330 (MGFMVMECGLGAFSLAVFHLI), 375–395 (LPWLFIGLATLVVPLFILVIA), 408–428 (GAIVLLFFGWITGVQVLFATH), 440–460 (MMILLSFTLIVVGYTFIGHAF), and 487–507 (GLVFLLALIVVAGWFSSYLAS).

Belongs to the inorganic carbon transporter (TC 9.A.2) DabB family. As to quaternary structure, forms a complex with DabA1.

The protein resides in the cell inner membrane. In terms of biological role, part of an energy-coupled inorganic carbon pump. The polypeptide is Probable inorganic carbon transporter subunit DabB1 (Halothiobacillus neapolitanus (strain ATCC 23641 / c2) (Thiobacillus neapolitanus)).